We begin with the raw amino-acid sequence, 671 residues long: DNA ligase (671 aa).

Residues D32–D36, S81–L82, and E113 contribute to the NAD(+) site. The active-site N6-AMP-lysine intermediate is the K115. Residues R136, E173, K290, and K314 each coordinate NAD(+). Zn(2+) is bound by residues C408, C411, C426, and C432. Residues E593–A671 form the BRCT domain.

This sequence belongs to the NAD-dependent DNA ligase family. LigA subfamily. Requires Mg(2+) as cofactor. The cofactor is Mn(2+).

The catalysed reaction is NAD(+) + (deoxyribonucleotide)n-3'-hydroxyl + 5'-phospho-(deoxyribonucleotide)m = (deoxyribonucleotide)n+m + AMP + beta-nicotinamide D-nucleotide.. In terms of biological role, DNA ligase that catalyzes the formation of phosphodiester linkages between 5'-phosphoryl and 3'-hydroxyl groups in double-stranded DNA using NAD as a coenzyme and as the energy source for the reaction. It is essential for DNA replication and repair of damaged DNA. The protein is DNA ligase of Salmonella typhi.